A 253-amino-acid polypeptide reads, in one-letter code: Triosephosphate isomerase (253 aa).

13–15 (NWK) provides a ligand contact to substrate. The active-site Electrophile is the His100. Catalysis depends on Glu169, which acts as the Proton acceptor. Substrate is bound by residues Gly175, Ser208, and 229-230 (GG).

This sequence belongs to the triosephosphate isomerase family. In terms of assembly, homodimer.

It localises to the cytoplasm. The catalysed reaction is D-glyceraldehyde 3-phosphate = dihydroxyacetone phosphate. Its pathway is carbohydrate biosynthesis; gluconeogenesis. It functions in the pathway carbohydrate degradation; glycolysis; D-glyceraldehyde 3-phosphate from glycerone phosphate: step 1/1. Its function is as follows. Involved in the gluconeogenesis. Catalyzes stereospecifically the conversion of dihydroxyacetone phosphate (DHAP) to D-glyceraldehyde-3-phosphate (G3P). In Synechococcus sp. (strain RCC307), this protein is Triosephosphate isomerase.